Here is a 149-residue protein sequence, read N- to C-terminus: FAD synthase (149 aa).

Residues 9 to 10 (TF), 14 to 17 (HPGH), N92, and Y119 each bind ATP.

The protein belongs to the archaeal FAD synthase family. In terms of assembly, homodimer. A divalent metal cation serves as cofactor.

It carries out the reaction FMN + ATP + H(+) = FAD + diphosphate. It functions in the pathway cofactor biosynthesis; FAD biosynthesis; FAD from FMN: step 1/1. Functionally, catalyzes the transfer of the AMP portion of ATP to flavin mononucleotide (FMN) to produce flavin adenine dinucleotide (FAD) coenzyme. The sequence is that of FAD synthase from Methanoculleus marisnigri (strain ATCC 35101 / DSM 1498 / JR1).